The following is a 512-amino-acid chain: MKLQTSADLQRWLQAGGPGPLHLVPTMGALHQGHAALIRAARQQGGRVLVSVFVNPLQFSPNEDFARYPRRLEEDHALALEAGADALWAPQPEDVFPAGAAGLTQLAPAPELVANLCGPSRPGHFEGVCTVVSRLLALVQPSHLHLGEKDWQQLQVLRRLVRDLRWPVQIVPCPTLRERDGLPLSSRNAYLSVEQRQQAALLPQALAQGQQLLDAGQRQAEPLLRAVRALMEDGGLAVDYLQLVDLPRLQELEQVTGPALLAAAVRCGEARLIDHRVLMSRLPILAIDGPAGAGKSTVTRQVAHELGLTYLDTGAMYRGVTWLLQQRGFEPQEGEPLQALLADLELRFGPASGTEQTLLVNGVDATSAIRTAEVTASVSAVAALPSVRAALTQQQQQLGQQGGLVAEGRDIGTAVFPDAELKIYLTATVAERARRRAADLAARSLPVPVLSQLEQEIADRDHKDSSREVAPLRQASDAVELLSDGLSIDEVVAQIVALFREWVPVEALNADA.

The segment at 1–276 is pantoate--beta-alanine ligase; it reads MKLQTSADLQ…CGEARLIDHR (276 aa). 27–34 serves as a coordination point for ATP; that stretch reads MGALHQGH. Histidine 34 serves as the catalytic Proton donor. Position 58 (glutamine 58) interacts with (R)-pantoate. Residue glutamine 58 coordinates beta-alanine. 147–150 contacts ATP; that stretch reads GEKD. Glutamine 153 is a binding site for (R)-pantoate. ATP-binding positions include leucine 176 and 184–187; that span reads LSSR. The interval 277–512 is cytidylate kinase; that stretch reads VLMSRLPILA…VPVEALNADA (236 aa).

This sequence in the N-terminal section; belongs to the pantothenate synthetase family. In the C-terminal section; belongs to the cytidylate kinase family. Type 1 subfamily.

The protein resides in the cytoplasm. The enzyme catalyses (R)-pantoate + beta-alanine + ATP = (R)-pantothenate + AMP + diphosphate + H(+). It catalyses the reaction CMP + ATP = CDP + ADP. It carries out the reaction dCMP + ATP = dCDP + ADP. It functions in the pathway cofactor biosynthesis; (R)-pantothenate biosynthesis; (R)-pantothenate from (R)-pantoate and beta-alanine: step 1/1. In terms of biological role, catalyzes the condensation of pantoate with beta-alanine in an ATP-dependent reaction via a pantoyl-adenylate intermediate. Catalyzes the transfer of a phosphate group from ATP to either CMP or dCMP to form CDP or dCDP and ADP, respectively. The sequence is that of Bifunctional pantoate ligase/cytidylate kinase from Synechococcus sp. (strain RCC307).